The chain runs to 223 residues: Phosphoribosylformylglycinamidine synthase subunit PurQ (223 aa).

The 221-residue stretch at 3 to 223 (SAVVQLPGLN…FASALDVIAA (221 aa)) folds into the Glutamine amidotransferase type-1 domain. Residue Cys-86 is the Nucleophile of the active site. Residues His-196 and Glu-198 contribute to the active site.

Part of the FGAM synthase complex composed of 1 PurL, 1 PurQ and 2 PurS subunits.

Its subcellular location is the cytoplasm. The enzyme catalyses N(2)-formyl-N(1)-(5-phospho-beta-D-ribosyl)glycinamide + L-glutamine + ATP + H2O = 2-formamido-N(1)-(5-O-phospho-beta-D-ribosyl)acetamidine + L-glutamate + ADP + phosphate + H(+). It catalyses the reaction L-glutamine + H2O = L-glutamate + NH4(+). It participates in purine metabolism; IMP biosynthesis via de novo pathway; 5-amino-1-(5-phospho-D-ribosyl)imidazole from N(2)-formyl-N(1)-(5-phospho-D-ribosyl)glycinamide: step 1/2. Part of the phosphoribosylformylglycinamidine synthase complex involved in the purines biosynthetic pathway. Catalyzes the ATP-dependent conversion of formylglycinamide ribonucleotide (FGAR) and glutamine to yield formylglycinamidine ribonucleotide (FGAM) and glutamate. The FGAM synthase complex is composed of three subunits. PurQ produces an ammonia molecule by converting glutamine to glutamate. PurL transfers the ammonia molecule to FGAR to form FGAM in an ATP-dependent manner. PurS interacts with PurQ and PurL and is thought to assist in the transfer of the ammonia molecule from PurQ to PurL. The polypeptide is Phosphoribosylformylglycinamidine synthase subunit PurQ (Rhizobium johnstonii (strain DSM 114642 / LMG 32736 / 3841) (Rhizobium leguminosarum bv. viciae)).